The chain runs to 209 residues: Uracil phosphoribosyltransferase (209 aa).

5-phospho-alpha-D-ribose 1-diphosphate is bound by residues R79, R104, and D131 to S139. Uracil contacts are provided by residues I194 and G199–A201. D200 is a binding site for 5-phospho-alpha-D-ribose 1-diphosphate.

This sequence belongs to the UPRTase family. The cofactor is Mg(2+).

The enzyme catalyses UMP + diphosphate = 5-phospho-alpha-D-ribose 1-diphosphate + uracil. Its pathway is pyrimidine metabolism; UMP biosynthesis via salvage pathway; UMP from uracil: step 1/1. Its activity is regulated as follows. Allosterically activated by GTP. Its function is as follows. Catalyzes the conversion of uracil and 5-phospho-alpha-D-ribose 1-diphosphate (PRPP) to UMP and diphosphate. The sequence is that of Uracil phosphoribosyltransferase from Macrococcus caseolyticus (strain JCSC5402) (Macrococcoides caseolyticum).